Consider the following 1696-residue polypeptide: MQEFGFMCKEREMETVRGVLPYWPRIYCKISLDLDRRVREATQQAFEQLILKVKKYLAPHLKSLMGFWLIAQCDTYSPAASSARVAFEAAFPAHKQPEALAFCKEEIMNVLLDHLLKETPDTLSDTQAVPIEDRESKYFRVVTCSLLALKRLLCMLPRSENSSLQERLAHLLSQSKFWKYSKHSTSSIRSAFFELMSALCQCSPDVLRAEASRLCPAVLLSIDDSDAVVCPALWEAVLYTITTIEDCWEHVNAQKGVLPKLWSVLREGGRGLATVIFPNLLPFISRVPTNIIKTPTDFYSNFFNSLGQGLSSERAVASPAECSAIISAYMECLRFAMQENAGEEEENKKVQQILISDQLMPLIDSSLKDPKLQNSPLFSQVEETLYSWEKKAESQGLDDKLSRIHATLLREFWENLAHICVSHVDVIEAGEKNLAGVSGLLQVLQNPNCLLKVNKKKKAKIRFKGEGDDESDAVSHVSESQPMSKFIMETCSSSGRDPGIAQLRQERLEDLVCKLAELSMVYISEQRSQQHLMFLAALLSTFPSIRVFQVLLQQSSEEDPKNLNSPDHDVTPRHKNPAVQFLYAKLIFWFNDKSLEESDFLVDILYSVLFCCTDSSERKHLLDDMTKMNFKWSVFLYIIQKACTDPEKYSLASDWLKGEVLGERLICLANDLCTSGLMDKATPSEAYCSKKWALLSLVLSEHVHNEYLIADAYVEKIINKLHSALMKARNLSKAGHLEQSVSFICDVGSNFFSSIKGCLQMPSAEDLLLTIFQLCAQASDTSHMSESLLLKLKNTWLAGLHSLVCQYKNMPQGSNFLKQSAQWVKDQIQTSHLNVKSLQSLICTVDDLYSTILDSSLSGFSLLAEHTASMMPSAETWQKMRHALSSQWLSKPLLEGRLSMNTETSGTDLKSFPKTWLPSHLCTASLLSKMALRLLEKEKSLKEEEIGVKINITVAEMLYSLQWCEELEKPPTLIGECCEMLCSLGVSHEKVMDLSVHLPGLLELLYNRSKEDGSLWSLTANRFIHKRGAGPSELLPLTEDTEKYFPVTLGSLHTIQSLSAFLCPELKEELVIQCTARLMTCSASAVSCTDGGFGYLAIINSCLGSDSDLCQEILPGVLKVMLSWKDDQEDIFLFSSNVQDSSQSLIGLNVEMIRFLSILLKYLASSVSSLVDVDWDFIMCSMLAWLESACESSAAYHIPLVRLFACASCDLATEISHYFESVATSTTMSLPANLMSEWKEFFSEGIYSLMLPMLVRIAEEYKASETSHMSHVLKSLGRTLGYISKEQLLNHKLPAKFVAGQKTNLTDSLQSLLNTLAPLLLYRERSVQITVYHLLDKIMADLPGFDDEDLKSYGDEDEEPALSPPAALMSVLAIQEDLVESILKEIPVGEFAVIEPLKEEFCFVLGYLLTWKLILTFFKAASSQLRALYSQYLRKTKSLNKLLYNLFKLMPHNPVLPGQASDMPSKEPKTFFTEELQLAVKGTATVQQEVPHLACCVYHMTLKDLPAMVRLWWNGCEKRIFNVVDRFTTKYVSSVLSSQEISSVQLSTQVFDGMTVKARSTTREVIATYSVDDICIELIIQLPQNYPLGSITVESGRRVGVAVQQWRNWMLQLNTYLTHQNGSIMEGLALWKNNVDKRFEGVEDCMICFSVIHGSNYSLPKKACRTCKKKFHSECLYKWFTSSNKSTCPLCRETFF.

HEAT repeat units lie at residues 17–55 (RGVL…KVKK), 102–140 (FCKE…KYFR), 144–181 (CSLL…WKYS), 209–250 (AEAS…CWEH), 252–289 (NAQK…RVPT), 354–394 (LISD…KAES), 431–468 (EKNL…GEGD), 542–580 (FPSI…PAVQ), 596–634 (EESD…KWSV), 921–958 (LCTA…AEML), 992–1029 (MDLS…KRGA), 1108–1148 (DLCQ…LIGL), 1150–1188 (VEMI…WLES), 1245–1282 (GIYS…TLGY), 1307–1344 (DSLQ…DLPG), 1371–1405 (VLAI…CFVL), and 1406–1442 (GYLL…LNKL). An RING-type zinc finger spans residues 1645-1692 (CMICFSVIHGSNYSLPKKACRTCKKKFHSECLYKWFTSSNKSTCPLCR).

Belongs to the LTN1 family. As to quaternary structure, component of the ribosome quality control complex (RQC), composed of at least the E3 ubiquitin ligase LTN1 and NEMF associated with the 60S ribosomal subunit. The complex probably also contains TCF25 as well as VCP/p97 and its ubiquitin-binding cofactors.

The protein resides in the cytoplasm. It localises to the cytosol. The catalysed reaction is S-ubiquitinyl-[E2 ubiquitin-conjugating enzyme]-L-cysteine + [acceptor protein]-L-lysine = [E2 ubiquitin-conjugating enzyme]-L-cysteine + N(6)-ubiquitinyl-[acceptor protein]-L-lysine.. It participates in protein modification; protein ubiquitination. In terms of biological role, E3 ubiquitin-protein ligase component of the ribosome quality control complex (RQC), a ribosome-associated complex that mediates ubiquitination and extraction of incompletely synthesized nascent chains for proteasomal degradation. Within the RQC complex, LTN1 is recruited to stalled 60S ribosomal subunits by NEMF and mediates ubiquitination of stalled nascent chains. Ubiquitination leads to VCP/p97 recruitment for extraction and degradation of the incomplete translation product. The protein is E3 ubiquitin-protein ligase listerin (ltn1) of Xenopus tropicalis (Western clawed frog).